The following is a 285-amino-acid chain: Transmembrane protein DDB_G0269096 (285 aa).

Disordered regions lie at residues 1–25 (MEDR…MSQS) and 59–87 (SFEN…NNKN). 2 stretches are compositionally biased toward low complexity: residues 12–25 (SDIS…MSQS) and 65–85 (NNNN…NNNN). Helical transmembrane passes span 124 to 144 (LEEI…LALI), 152 to 172 (AQMQ…FGVP), 182 to 202 (LIMG…ALVY), 205 to 225 (ANFE…MQFT), and 250 to 270 (FYFI…TALV).

Its subcellular location is the membrane. This is Transmembrane protein DDB_G0269096 from Dictyostelium discoideum (Social amoeba).